We begin with the raw amino-acid sequence, 213 residues long: LexA repressor (213 aa).

Residues 29–49 (RAEIAQALGFRSPNAAEDHLK) constitute a DNA-binding region (H-T-H motif). Active-site for autocatalytic cleavage activity residues include Ser-131 and Lys-168.

Belongs to the peptidase S24 family. As to quaternary structure, homodimer.

It carries out the reaction Hydrolysis of Ala-|-Gly bond in repressor LexA.. Represses a number of genes involved in the response to DNA damage (SOS response), including recA and lexA. In the presence of single-stranded DNA, RecA interacts with LexA causing an autocatalytic cleavage which disrupts the DNA-binding part of LexA, leading to derepression of the SOS regulon and eventually DNA repair. This chain is LexA repressor, found in Bordetella avium (strain 197N).